Reading from the N-terminus, the 289-residue chain is SAGA-associated factor 29kDa (289 aa).

Residues 9 to 36 adopt a coiled-coil conformation; it reads AQQIQDRLKDIQQNIHNVDEERRRAENS. The region spanning 137–278 is the SGF29 C-terminal domain; that stretch reads GNYVAKVGDN…VIAYRPTKKG (142 aa). Histone H3K4me3 N-terminus binding regions lie at residues 179–181 and 225–228; these read DID and QTTC. The interval 249–251 is histone H3K4me3 binding; it reads FED.

The protein belongs to the SGF29 family. Component of the Spt-Ada-Gcn5 acetyltransferase (SAGA) complex consisting of wda/Taf5L, Saf6, Taf9, Taf10b, Taf12, Ada1, Spt3, Spt7, Spt20, Sf3b3, Sf3b5, Nipped-A/Tra1, a histone acetyltransferase (HAT) module made up of Gcn5, Ada2b (Isoform B), Ada3 and Sgf29, and a deubiquitinase (DUB) module made up of not/nonstop, Sgf11, Atxn7 and e(y)2. Component of the Chiffon histone acetyltransferase (CHAT) complex consisting of Ada3, Sgf29, Gcn5, chif/chiffon and Ada2b (Isoform A).

Its subcellular location is the nucleus. In terms of biological role, component of both the SAGA and CHAT histone acetyltransferase complexes, which both predominantly acetylate histone H3. The protein is SAGA-associated factor 29kDa of Drosophila melanogaster (Fruit fly).